Consider the following 542-residue polypeptide: Putative serine/threonine-protein kinase L205 (542 aa).

Residues 20-30 (FEKKSVGHNSD) show a composition bias toward basic and acidic residues. The segment at 20–49 (FEKKSVGHNSDDEYDDTVPYNEDDETSEEE) is disordered. The span at 31–49 (DEYDDTVPYNEDDETSEEE) shows a compositional bias: acidic residues. The Protein kinase domain occupies 69–538 (YLLLKKIGSG…ADELLKHPWL (470 aa)). Residues 75-83 (IGSGNNASV) and lysine 98 contribute to the ATP site. Aspartate 201 acts as the Proton acceptor in catalysis. A disordered region spans residues 278-314 (EELIPDDPDNNEKYYDSTDSEEYDYSDNSDYYDDDED). Over residues 295–314 (TDSEEYDYSDNSDYYDDDED) the composition is skewed to acidic residues.

Belongs to the protein kinase superfamily. Ser/Thr protein kinase family.

It carries out the reaction L-seryl-[protein] + ATP = O-phospho-L-seryl-[protein] + ADP + H(+). The catalysed reaction is L-threonyl-[protein] + ATP = O-phospho-L-threonyl-[protein] + ADP + H(+). In Acanthamoeba polyphaga (Amoeba), this protein is Putative serine/threonine-protein kinase L205.